We begin with the raw amino-acid sequence, 653 residues long: tRNA uridine 5-carboxymethylaminomethyl modification enzyme MnmG (653 aa).

FAD is bound by residues Gly18–Gly23, Val130, and Thr195. NAD(+) is bound at residue Gly287 to Phe301. Position 384 (Gln384) interacts with FAD. Positions Ser624–Leu653 are disordered. Residues Val632–Ser642 show a composition bias toward basic and acidic residues. Residues Ser643–Leu653 are compositionally biased toward polar residues.

This sequence belongs to the MnmG family. As to quaternary structure, homodimer. Heterotetramer of two MnmE and two MnmG subunits. The cofactor is FAD.

It is found in the cytoplasm. Its function is as follows. NAD-binding protein involved in the addition of a carboxymethylaminomethyl (cmnm) group at the wobble position (U34) of certain tRNAs, forming tRNA-cmnm(5)s(2)U34. The sequence is that of tRNA uridine 5-carboxymethylaminomethyl modification enzyme MnmG from Rhodopirellula baltica (strain DSM 10527 / NCIMB 13988 / SH1).